The chain runs to 278 residues: Orotidine 5'-phosphate decarboxylase (278 aa).

The active-site Proton donor is Lys95.

It belongs to the OMP decarboxylase family. Type 2 subfamily.

It catalyses the reaction orotidine 5'-phosphate + H(+) = UMP + CO2. The protein operates within pyrimidine metabolism; UMP biosynthesis via de novo pathway; UMP from orotate: step 2/2. The chain is Orotidine 5'-phosphate decarboxylase from Mycobacterium ulcerans (strain Agy99).